A 294-amino-acid polypeptide reads, in one-letter code: ATP synthase gamma chain (294 aa).

Belongs to the ATPase gamma chain family. As to quaternary structure, F-type ATPases have 2 components, CF(1) - the catalytic core - and CF(0) - the membrane proton channel. CF(1) has five subunits: alpha(3), beta(3), gamma(1), delta(1), epsilon(1). CF(0) has three main subunits: a, b and c.

The protein localises to the cell inner membrane. In terms of biological role, produces ATP from ADP in the presence of a proton gradient across the membrane. The gamma chain is believed to be important in regulating ATPase activity and the flow of protons through the CF(0) complex. This is ATP synthase gamma chain from Paraburkholderia xenovorans (strain LB400).